The sequence spans 88 residues: Small ribosomal subunit protein uS17 (88 aa).

The protein belongs to the universal ribosomal protein uS17 family. In terms of assembly, part of the 30S ribosomal subunit.

In terms of biological role, one of the primary rRNA binding proteins, it binds specifically to the 5'-end of 16S ribosomal RNA. The polypeptide is Small ribosomal subunit protein uS17 (Lactobacillus acidophilus (strain ATCC 700396 / NCK56 / N2 / NCFM)).